We begin with the raw amino-acid sequence, 288 residues long: Probable endonuclease 4 (288 aa).

Zn(2+)-binding residues include His75, His115, Glu153, Asp187, His190, His224, Asp237, His239, and Glu269.

Belongs to the AP endonuclease 2 family. Zn(2+) is required as a cofactor.

It catalyses the reaction Endonucleolytic cleavage to 5'-phosphooligonucleotide end-products.. Its function is as follows. Endonuclease IV plays a role in DNA repair. It cleaves phosphodiester bonds at apurinic or apyrimidinic (AP) sites, generating a 3'-hydroxyl group and a 5'-terminal sugar phosphate. This chain is Probable endonuclease 4, found in Chlamydia trachomatis serovar L2 (strain ATCC VR-902B / DSM 19102 / 434/Bu).